A 1322-amino-acid polypeptide reads, in one-letter code: Centrosome-associated protein Alms1a (1322 aa).

Disordered regions lie at residues 1–26, 53–135, 165–193, 252–442, 464–614, 657–752, 814–844, 856–911, and 1083–1109; these read MRAKRGAVGKVMMSGSRHNKLAESSR, TASS…SEVT, SQSAEDIRTPTKSPQMQNKKTQTPESVLK, EEPS…NSVY, KHNQ…GSRP, ESST…ASTD, SKSQKKANTESATAAQIPSSMRCMGDQKERP, AEAE…LNQR, and ASATGGAGGSAITRSTTTTTNSSSSMM. Low complexity predominate over residues 53 to 62; that stretch reads TASSGASGST. Over residues 78-111 the composition is skewed to basic and acidic residues; that stretch reads MEHESRPESGHRRRTKSSDHRSPDERGEAKEQLR. Over residues 165 to 189 the composition is skewed to polar residues; the sequence is SQSAEDIRTPTKSPQMQNKKTQTPE. The span at 279-292 shows a compositional bias: low complexity; that stretch reads SLNSGMESSLSSNK. The span at 309–318 shows a compositional bias: polar residues; the sequence is EVSSCQTDCR. Over residues 319 to 330 the composition is skewed to low complexity; sequence SSSQKESTQGSS. Residues 338-350 show a composition bias toward polar residues; sequence NFTTEGTQCSYNR. A compositionally biased stretch (acidic residues) spans 354–364; the sequence is EIDSIMEEEES. Basic and acidic residues-rich tracts occupy residues 365–375 and 394–408; these read IDRRKKDDLRI and SRRESLSSYRRDDSR. Positions 409 to 430 are enriched in low complexity; it reads LNSPNSSRLGSEVSSRVESSRS. Basic and acidic residues-rich tracts occupy residues 464–487, 495–512, and 519–538; these read KHNQRRQQEMEVEPKKQLEKEQHQ, PKGRELKDKNHHSGREQQ, and RDQRKAEQRHEKDHQLEREQ. 2 stretches are compositionally biased toward low complexity: residues 594-605 and 657-669; these read STGVTASTSTTS and ESSTSSRSLSSSS. Positions 678–696 are enriched in polar residues; sequence GSLQQVAATNTNQSNARSS. The segment covering 714 to 735 has biased composition (low complexity); that stretch reads AIGSSSPLPESVSYSGSTSGSG. Polar residues-rich tracts occupy residues 737–751 and 822–832; these read VITQKTNIPNRNAST and TESATAAQIPS. The span at 893–907 shows a compositional bias: pro residues; it reads LPAPPPTQPPPPPPH. Residues 1092–1107 show a composition bias toward low complexity; the sequence is SAITRSTTTTTNSSSS. The tract at residues 1115-1322 is interaction with Klp10A; it reads MSVPMGMMNT…ISLNHSMAIM (208 aa). An ALMS motif region spans residues 1190–1309; that stretch reads SLQDQLQLAR…FNKRLKSRVA (120 aa).

This sequence belongs to the ALMS1 family. Interacts (via C-terminus) with Klp10A. Interacts with SAK. Expressed in all germlines, including germline stem cells and spermatogonia.

It localises to the cytoplasm. The protein localises to the cytoskeleton. The protein resides in the microtubule organizing center. It is found in the centrosome. Its subcellular location is the centriole. Functionally, in asymmetrically dividing germline stem cells (GSCs), plays a critical role in ensuring centrosome duplication, which is essential for the production of centrosomes and centrioles in all downstream germ cells. Might recruit SAK for daughter centriole duplication. This is Centrosome-associated protein Alms1a from Drosophila melanogaster (Fruit fly).